The following is a 1298-amino-acid chain: Histone-lysine N-methyltransferase EHMT1 (1298 aa).

Disordered regions lie at residues 1–111 (MAAA…HVTA) and 144–192 (ASSL…RKLP). N-acetylalanine is present on Ala-2. Lys-22 is covalently cross-linked (Glycyl lysine isopeptide (Lys-Gly) (interchain with G-Cter in SUMO1); alternate). Lys-22 participates in a covalent cross-link: Glycyl lysine isopeptide (Lys-Gly) (interchain with G-Cter in SUMO2); alternate. Residues 38 to 50 (SAEKQAGEAHMAA) are compositionally biased toward basic and acidic residues. Polar residues-rich tracts occupy residues 54–67 (TNGSCENSDASSHA) and 76–89 (SARVNPQDGTNTLT). Over residues 96–105 (VSERDSEAAK) the composition is skewed to basic and acidic residues. Glycyl lysine isopeptide (Lys-Gly) (interchain with G-Cter in SUMO2) cross-links involve residues Lys-190, Lys-199, Lys-231, Lys-234, Lys-317, and Lys-327. The segment at 211–234 (VVGLHAASKDPREVREARDHKEPK) is disordered. Over residues 217–234 (ASKDPREVREARDHKEPK) the composition is skewed to basic and acidic residues. Residues 339 to 479 (VNGESLEMDS…QTAPGDSTGY (141 aa)) are disordered. Residues 344–360 (LEMDSDEDDSEELEEDD) show a composition bias toward acidic residues. Residues 373–393 (EDSRTSKESMSEADRAQKMDG) are compositionally biased toward basic and acidic residues. Acidic residues predominate over residues 394–416 (ESEEEQESVDTGEEEEGGDESDL). Lys-432 participates in a covalent cross-link: Glycyl lysine isopeptide (Lys-Gly) (interchain with G-Cter in SUMO2). Ser-435 is subject to Phosphoserine. Over residues 440 to 452 (PARKRRRRSRKKP) the composition is skewed to basic residues. The segment covering 460–474 (SYKSSAGSAEQTAPG) has biased composition (polar residues). The residue at position 483 (Ser-483) is a Phosphoserine. Residues Lys-492, Lys-559, Lys-644, Lys-659, Lys-684, and Lys-731 each participate in a glycyl lysine isopeptide (Lys-Gly) (interchain with G-Cter in SUMO2) cross-link. The segment at 644–717 (KADTTSTVTP…TPGLSQGPGK (74 aa)) is disordered. ANK repeat units follow at residues 737–766 (FHPKQLYFSARQGELQKVLLMLVDGIDPNF), 772–801 (NKRSPLHAAAEAGHVDICHMLVQAGANIDT), 805–834 (DQRTPLMEAAENNHLEAVKYLIKAGALVDP), 838–868 (EGSTCLHLAAKKGHYEVVQYLLSNGQMDVNC), 872–901 (GGWTPMIWATEYKHVDLVKLLLSKGSDINI), 905–934 (EENICLHWAAFSGCVDIAEILLAAKCDLHA), 938–967 (HGDSPLHIAARENRYDCVVLFLSRDSDVTL), and 971–1004 (EGETPLQCASLNSQVWSALQMSKALQDSAPDRPS). The segment at 905 to 907 (EEN) is histone H3K9me binding. Phosphoserine is present on residues Ser-1004 and Ser-1048. Positions 1060 to 1123 (QYCVCIDDCS…NCRNRVVQNG (64 aa)) constitute a Pre-SET domain. Zn(2+)-binding residues include Cys-1062, Cys-1064, Cys-1068, Cys-1073, Cys-1075, Cys-1105, Cys-1109, Cys-1111, and Cys-1115. Residues 1126–1243 (ARLQLYRTRD…AGEQLGFDYG (118 aa)) form the SET domain. Residues 1136 to 1138 (MGW), Tyr-1173, and 1200 to 1201 (NH) each bind S-adenosyl-L-methionine. The tract at residues 1162–1181 (DSEADVREEDSYLFDLDNKD) is interaction with histone H3. A Zn(2+)-binding site is contributed by Cys-1203. Residues 1242 to 1245 (YGER) are interaction with histone H3. Cys-1256 contacts Zn(2+). Arg-1257 lines the S-adenosyl-L-methionine pocket. Zn(2+) is bound by residues Cys-1258 and Cys-1263. The segment at 1274–1298 (QASAAQEAQEDGLPDTSSAAAADPL) is disordered.

It belongs to the class V-like SAM-binding methyltransferase superfamily. Heterodimer; heterodimerizes with EHMT2. Interacts with WIZ and EHMT2. Part of the E2F6.com-1 complex in G0 phase composed of E2F6, MGA, MAX, TFDP1, CBX3, BAT8, EHMT1, RING1, RNF2, MBLR, L3MBTL2 and YAF2. Interacts (via ANK repeats) with RELA (when monomethylated at 'Lys-310'). Interacts with MPHOSPH8. Interacts with CDYL. Interacts with REST only in the presence of CDYL. Part of a complex containing at least CDYL, REST, WIZ, SETB1, EHMT1 and EHMT2. Interacts with BAZ2B. Widely expressed.

It localises to the nucleus. Its subcellular location is the chromosome. It catalyses the reaction N(6)-methyl-L-lysyl(9)-[histone H3] + S-adenosyl-L-methionine = N(6),N(6)-dimethyl-L-lysyl(9)-[histone H3] + S-adenosyl-L-homocysteine + H(+). The enzyme catalyses L-lysyl(9)-[histone H3] + S-adenosyl-L-methionine = N(6)-methyl-L-lysyl(9)-[histone H3] + S-adenosyl-L-homocysteine + H(+). Methyltransferase activity is inhibited by BIX-01294. Efficiently inhibited by compound E72, a BIX-01294 derivative in which the diazepane ring and the benzyl are replaced with a 3-dimethylaminopropyl and a 5-aminopentyl group at sites B and C, respectively. In terms of biological role, histone methyltransferase that specifically mono- and dimethylates 'Lys-9' of histone H3 (H3K9me1 and H3K9me2, respectively) in euchromatin. H3K9me represents a specific tag for epigenetic transcriptional repression by recruiting HP1 proteins to methylated histones. Also weakly methylates 'Lys-27' of histone H3 (H3K27me). Also required for DNA methylation, the histone methyltransferase activity is not required for DNA methylation, suggesting that these 2 activities function independently. Probably targeted to histone H3 by different DNA-binding proteins like E2F6, MGA, MAX and/or DP1. During G0 phase, it probably contributes to silencing of MYC- and E2F-responsive genes, suggesting a role in G0/G1 transition in cell cycle. In addition to the histone methyltransferase activity, also methylates non-histone proteins: mediates dimethylation of 'Lys-373' of p53/TP53. Represses the expression of mitochondrial function-related genes, perhaps by occupying their promoter regions, working in concert with probable chromatin reader BAZ2B. In Homo sapiens (Human), this protein is Histone-lysine N-methyltransferase EHMT1 (EHMT1).